A 766-amino-acid polypeptide reads, in one-letter code: FYVE, RhoGEF and PH domain-containing protein 4 (766 aa).

Residues 1–150 (MEESNPAPTS…SSIANSHDEN (150 aa)) are actin filament-binding. Composition is skewed to polar residues over residues 47–62 (LNIP…TSSP) and 70–85 (HSPQ…TQGQ). 2 disordered regions span residues 47–86 (LNIP…QGQH) and 143–173 (IANS…GEPG). One can recognise a DH domain in the interval 206–393 (KLHKIATELL…STAASHSNSA (188 aa)). In terms of domain architecture, PH 1 spans 422 to 521 (ELIKEGQILK…WIKALQESID (100 aa)). An FYVE-type zinc finger spans residues 559-619 (DNEVTMCMKC…VCKDCYQIIS (61 aa)). 8 residues coordinate Zn(2+): Cys565, Cys568, Cys582, Cys585, Cys590, Cys593, Cys611, and Cys614. The region spanning 643–740 (NSEVCSFLQY…WLKIILLAVT (98 aa)) is the PH 2 domain. Residues Ser702 and Ser716 each carry the phosphoserine modification. Residues 746–766 (GPSEHLATLNNLPGPKKKSEC) form a disordered region.

In terms of assembly, homooligomer. In terms of tissue distribution, detected in thymus, lung, heart, skeletal muscle, small intestine, liver, kidney, spleen and testis. Expressed in all parts of the brain and in the spinal cord at embryonic, postnatal, and adult stages. Levels of expression are lower in postnatal and adult tissues than in embryonic tissues.

It localises to the cytoplasm. Its subcellular location is the cytoskeleton. It is found in the cell projection. The protein resides in the filopodium. In terms of biological role, activates CDC42, a member of the Ras-like family of Rho- and Rac proteins, by exchanging bound GDP for free GTP. Activates MAPK8. Plays a role in regulating the actin cytoskeleton and cell shape. Promotes the formation of lamellipodia. In Mus musculus (Mouse), this protein is FYVE, RhoGEF and PH domain-containing protein 4 (Fgd4).